The primary structure comprises 529 residues: GTPase Obg (529 aa).

Positions 2–159 constitute an Obg domain; it reads PTFVDRVVLH…LDAVLELKTV (158 aa). The segment at 62–86 is disordered; that stretch reads FHPHQRASRGRPGQGSNRHGADGAD. Residues 160–332 form the OBG-type G domain; it reads ADVALVGFPS…LSLALADLVA (173 aa). Residues 166–173, 191–195, 213–216, 284–287, and 313–315 each bind GTP; these read GFPSAGKS, FTTLV, DVPG, NKID, and STA. Residues serine 173 and threonine 193 each coordinate Mg(2+). The OCT domain occupies 350 to 427; it reads PRAVNEPDFT…IGEVTFDWEP (78 aa). 2 disordered regions span residues 434-494 and 506-529; these read LGNG…DRLR and ARRA…EEEG. Composition is skewed to low complexity over residues 461–472 and 508–520; these read AGTAASGAAPSP and RAAA…VRGE.

It belongs to the TRAFAC class OBG-HflX-like GTPase superfamily. OBG GTPase family. Monomer. Mg(2+) serves as cofactor.

The protein resides in the cytoplasm. Functionally, an essential GTPase which binds GTP, GDP and possibly (p)ppGpp with moderate affinity, with high nucleotide exchange rates and a fairly low GTP hydrolysis rate. Plays a role in control of the cell cycle, stress response, ribosome biogenesis and in those bacteria that undergo differentiation, in morphogenesis control. This is GTPase Obg from Frankia casuarinae (strain DSM 45818 / CECT 9043 / HFP020203 / CcI3).